The primary structure comprises 177 residues: Putative adenylate kinase (177 aa).

Positions 10, 12, 13, 14, and 15 each coordinate ATP. Residues 30–50 (SLRDYAIEKGIGEMKGDELEV) are NMP. Residues 99–109 (ERGYSREKVGE) are LID. Positions 100 and 138 each coordinate ATP.

This sequence belongs to the adenylate kinase family. AK6 subfamily. Interacts with uS11. Not a structural component of 40S pre-ribosomes, but transiently interacts with them by binding to uS11.

It carries out the reaction AMP + ATP = 2 ADP. It catalyses the reaction ATP + H2O = ADP + phosphate + H(+). Its function is as follows. Broad-specificity nucleoside monophosphate (NMP) kinase that catalyzes the reversible transfer of the terminal phosphate group between nucleoside triphosphates and monophosphates. Also has ATPase activity. Involved in the late maturation steps of the 30S ribosomal particles, specifically 16S rRNA maturation. While NMP activity is not required for ribosome maturation, ATPase activity is. Associates transiently with small ribosomal subunit protein uS11. ATP hydrolysis breaks the interaction with uS11. May temporarily remove uS11 from the ribosome to enable a conformational change of the ribosomal RNA that is needed for the final maturation step of the small ribosomal subunit. The sequence is that of Putative adenylate kinase from Thermococcus gammatolerans (strain DSM 15229 / JCM 11827 / EJ3).